Here is a 61-residue protein sequence, read N- to C-terminus: uncharacterized protein (61 aa).

This is an uncharacterized protein from Archaeoglobus fulgidus (strain ATCC 49558 / DSM 4304 / JCM 9628 / NBRC 100126 / VC-16).